A 320-amino-acid polypeptide reads, in one-letter code: Porphobilinogen deaminase (320 aa).

Cys251 is subject to S-(dipyrrolylmethanemethyl)cysteine.

It belongs to the HMBS family. Monomer. The cofactor is dipyrromethane.

The enzyme catalyses 4 porphobilinogen + H2O = hydroxymethylbilane + 4 NH4(+). Its pathway is porphyrin-containing compound metabolism; protoporphyrin-IX biosynthesis; coproporphyrinogen-III from 5-aminolevulinate: step 2/4. In terms of biological role, tetrapolymerization of the monopyrrole PBG into the hydroxymethylbilane pre-uroporphyrinogen in several discrete steps. The polypeptide is Porphobilinogen deaminase (Phenylobacterium zucineum (strain HLK1)).